The primary structure comprises 828 residues: Glycerol-3-phosphate acyltransferase 1, mitochondrial (828 aa).

At 1–87 the chain is on the cytoplasmic side; that stretch reads MDESALTLGT…FFNPSIPSLG (87 aa). The interval 80-120 is important for mitochondrial localization; that stretch reads NPSIPSLGLRNVIYINETHTRHRGWLARRLSYVLFIQERDV. An intramembrane segment occupies 88 to 118; it reads LRNVIYINETHTRHRGWLARRLSYVLFIQER. Residues 119 to 828 lie on the Cytoplasmic side of the membrane; that stretch reads DVHKGMFATN…LEYILSFVVL (710 aa). The HXXXXD motif motif lies at 230–235; that stretch reads HRSHID. CoA-binding residues include R278, R279, K288, R293, and R328. At S380 the chain carries Phosphoserine. The tract at residues 435-455 is disordered; that stretch reads SRPSDAADEGRDTSINESRNA. Residues 442 to 455 show a composition bias toward basic and acidic residues; that stretch reads DEGRDTSINESRNA. R462 contacts CoA. 2 positions are modified to phosphoserine: S688 and S695. N6-acetyllysine occurs at positions 780 and 784.

It belongs to the GPAT/DAPAT family.

Its subcellular location is the mitochondrion outer membrane. It catalyses the reaction sn-glycerol 3-phosphate + an acyl-CoA = a 1-acyl-sn-glycero-3-phosphate + CoA. The catalysed reaction is (9Z,12Z)-octadecadienoyl-CoA + sn-glycerol 3-phosphate = 1-(9Z,12Z)-octadecadienoyl-sn-glycero-3-phosphate + CoA. The enzyme catalyses sn-glycerol 3-phosphate + (9Z)-octadecenoyl-CoA = 1-(9Z-octadecenoyl)-sn-glycero-3-phosphate + CoA. It carries out the reaction sn-glycerol 3-phosphate + octadecanoyl-CoA = 1-octadecanoyl-sn-glycero-3-phosphate + CoA. It catalyses the reaction sn-glycerol 3-phosphate + hexadecanoyl-CoA = 1-hexadecanoyl-sn-glycero-3-phosphate + CoA. The catalysed reaction is dodecanoyl-CoA + sn-glycerol 3-phosphate = 1-dodecanoyl-sn-glycerol 3-phosphate + CoA. The enzyme catalyses 1-acyl-sn-glycero-3-phospho-(1'-sn-glycerol) + an acyl-CoA = a 1,2-diacyl-sn-glycero-3-phospho-(1'-sn-glycerol) + CoA. It functions in the pathway phospholipid metabolism; CDP-diacylglycerol biosynthesis; CDP-diacylglycerol from sn-glycerol 3-phosphate: step 1/3. In terms of biological role, mitochondrial membrane protein that catalyzes the essential first step of biosynthesis of glycerolipids such as triglycerides, phosphatidic acids and lysophosphatidic acids. Esterifies acyl-group from acyl-coenzyme A (acyl-CoA) to the sn-1 position of glycerol-3-phosphate, to produce lysophosphatidic acid. Has a narrow hydrophobic binding cleft that selects for a linear acyl chain. Catalytic activity is higher for substrates with a 16-carbon acyl chain. The polypeptide is Glycerol-3-phosphate acyltransferase 1, mitochondrial (Homo sapiens (Human)).